The sequence spans 176 residues: Large ribosomal subunit protein uL10 (176 aa).

The protein belongs to the universal ribosomal protein uL10 family. As to quaternary structure, part of the ribosomal stalk of the 50S ribosomal subunit. The N-terminus interacts with L11 and the large rRNA to form the base of the stalk. The C-terminus forms an elongated spine to which L12 dimers bind in a sequential fashion forming a multimeric L10(L12)X complex.

Its function is as follows. Forms part of the ribosomal stalk, playing a central role in the interaction of the ribosome with GTP-bound translation factors. In Mycobacteroides abscessus (strain ATCC 19977 / DSM 44196 / CCUG 20993 / CIP 104536 / JCM 13569 / NCTC 13031 / TMC 1543 / L948) (Mycobacterium abscessus), this protein is Large ribosomal subunit protein uL10.